A 202-amino-acid chain; its full sequence is Holliday junction branch migration complex subunit RuvA (202 aa).

The segment at 1-64 (MFAYIRGRLE…EDVISLYGFL (64 aa)) is domain I. Positions 65–143 (TQEELNVFEL…KEQLTEYAQS (79 aa)) are domain II. Positions 144-152 (EEGGKVLDT) are flexible linker. The domain III stretch occupies residues 152–202 (TDSSKMAEAVSALMVLGYSPAEANKAVSAVYREDMDIETIIKNALKGLARP).

The protein belongs to the RuvA family. As to quaternary structure, homotetramer. Forms an RuvA(8)-RuvB(12)-Holliday junction (HJ) complex. HJ DNA is sandwiched between 2 RuvA tetramers; dsDNA enters through RuvA and exits via RuvB. An RuvB hexamer assembles on each DNA strand where it exits the tetramer. Each RuvB hexamer is contacted by two RuvA subunits (via domain III) on 2 adjacent RuvB subunits; this complex drives branch migration. In the full resolvosome a probable DNA-RuvA(4)-RuvB(12)-RuvC(2) complex forms which resolves the HJ.

The protein localises to the cytoplasm. In terms of biological role, the RuvA-RuvB-RuvC complex processes Holliday junction (HJ) DNA during genetic recombination and DNA repair, while the RuvA-RuvB complex plays an important role in the rescue of blocked DNA replication forks via replication fork reversal (RFR). RuvA specifically binds to HJ cruciform DNA, conferring on it an open structure. The RuvB hexamer acts as an ATP-dependent pump, pulling dsDNA into and through the RuvAB complex. HJ branch migration allows RuvC to scan DNA until it finds its consensus sequence, where it cleaves and resolves the cruciform DNA. This is Holliday junction branch migration complex subunit RuvA from Acetivibrio thermocellus (strain ATCC 27405 / DSM 1237 / JCM 9322 / NBRC 103400 / NCIMB 10682 / NRRL B-4536 / VPI 7372) (Clostridium thermocellum).